The chain runs to 264 residues: Apolipoprotein A-I (264 aa).

A signal peptide spans 1 to 18 (MKAVVLTVAVLFLTGSQA). 2 repeat units span residues 67–88 (LKLL…EQLG) and 89–110 (PVTQ…QEMN). Residues 67–264 (LKLLDNWDTL…DDAAKKLSSQ (198 aa)) form a 10 X approximate tandem repeats region. Residue Met109 is modified to Methionine sulfoxide. The stretch at 111 to 121 (KDLEEVKQKVQ) is one 3; half-length repeat. 3 tandem repeats follow at residues 122–143 (PYLE…QKVE), 144–165 (PLST…EKLT), and 166–187 (PLGE…TQLA). One copy of the 7; truncated repeat lies at 188 to 207 (PYSDKMRERLAERLTALKDS). Met193 is subject to Methionine sulfoxide. Repeat unit 8 spans residues 208–229 (ASFAEYHAKASEHLKTLREKAK). The 9; half-length repeat unit spans residues 230–240 (PAIEDLGQGLL). Repeat unit 10 spans residues 241 to 264 (PVLENLKASFLSAIDDAAKKLSSQ).

It belongs to the apolipoprotein A1/A4/E family. Homodimer. Interacts with APOA1BP and CLU. Component of a sperm activating protein complex (SPAP), consisting of APOA1, an immunoglobulin heavy chain, an immunoglobulin light chain and albumin. Interacts with NDRG1. Interacts with SCGB3A2. Interacts with NAXE and YJEFN3. In terms of processing, glycosylated. Post-translationally, palmitoylated. Phosphorylation sites are present in the extracellular medium.

It is found in the secreted. Functionally, participates in the reverse transport of cholesterol from tissues to the liver for excretion by promoting cholesterol efflux from tissues and by acting as a cofactor for the lecithin cholesterol acyltransferase (LCAT). As part of the SPAP complex, activates spermatozoa motility. The protein is Apolipoprotein A-I (APOA1) of Castor canadensis (American beaver).